Reading from the N-terminus, the 186-residue chain is Elongation factor P (186 aa).

N-alpha-linked (Rha) arginine glycosylation occurs at R32.

Belongs to the elongation factor P family. Glycosylated ar Arg-32 by EarP: arginine rhamnosylation is required for EF-P function and rescue of polyproline stalled ribosomes.

It is found in the cytoplasm. Its pathway is protein biosynthesis; polypeptide chain elongation. Functionally, involved in peptide bond synthesis. Stimulates efficient translation and peptide-bond synthesis on native or reconstituted 70S ribosomes in vitro. Probably functions indirectly by altering the affinity of the ribosome for aminoacyl-tRNA, thus increasing their reactivity as acceptors for peptidyl transferase. The polypeptide is Elongation factor P (Shewanella oneidensis (strain ATCC 700550 / JCM 31522 / CIP 106686 / LMG 19005 / NCIMB 14063 / MR-1)).